The sequence spans 625 residues: Tumor necrosis factor receptor superfamily member 11A (625 aa).

A signal peptide spans 1-30 (MAPRARRRRQLPAPLLALCVLLVPLQVTLQ). The Extracellular portion of the chain corresponds to 31–214 (VTPPCTQERH…PKEAQAYLPS (184 aa)). 9 cysteine pairs are disulfide-bonded: cysteine 35/cysteine 47, cysteine 48/cysteine 61, cysteine 51/cysteine 69, cysteine 72/cysteine 87, cysteine 93/cysteine 113, cysteine 115/cysteine 128, cysteine 125/cysteine 127, cysteine 134/cysteine 152, and cysteine 155/cysteine 170. 4 TNFR-Cys repeats span residues 35–69 (CTQE…DSVC), 72–113 (CGPD…PRRC), 115–152 (CTAG…DTVC), and 155–195 (CLLG…DVVC). N-linked (GlcNAc...) asparagine glycosylation is present at asparagine 106. Positions 134, 135, 138, 161, and 163 each coordinate Na(+). Asparagine 175 is a glycosylation site (N-linked (GlcNAc...) asparagine). Cysteine 176 and cysteine 195 are disulfide-bonded. A helical transmembrane segment spans residues 215–234 (LIVLLLFISVVVVAAIIFGV). Residues 235–625 (YYRKGGKALT…HTQGSGQCAE (391 aa)) lie on the Cytoplasmic side of the membrane. Disordered stretches follow at residues 331–356 (TQGD…STGS), 388–413 (GTES…MPVS), and 479–524 (SMAE…FISS). Positions 499-511 (SGSSPSDQPPASG) are enriched in low complexity. Polar residues predominate over residues 512-524 (NVTGNSNSTFISS). Positions 532–537 (GDIIVV) are required for interaction with EEIG1 and osteoclast differentiation. The interval 542 to 625 (TSQEGPGSAE…HTQGSGQCAE (84 aa)) is disordered. Low complexity predominate over residues 543 to 558 (SQEGPGSAEPESEPVG). Residues 561 to 571 (VQEETLAHRDS) show a composition bias toward basic and acidic residues. At serine 571 the chain carries Phosphoserine. Positions 603–625 (RPVQEQGGAQTSLHTQGSGQCAE) are enriched in polar residues.

Binds to the clefts between the subunits of the TNFSF11 ligand trimer to form a heterohexamer. Part of a complex composed of EEIG1, TNFRSF11A/RANK, PLCG2, GAB2, TEC and BTK; complex formation increases in the presence of TNFSF11/RANKL. Interacts with TRAF1, TRAF2, TRAF3, TRAF5 and TRAF6. Interacts (via cytoplasmic domain) with GAB2. Interacts (via cytoplasmic domain); with EEIG1 (via N-terminus); when in the presence of TNFSF11/RANKL. In terms of tissue distribution, ubiquitous expression with high levels in trabecular bone, thymus, small intestine, lung, brain and kidney. Weakly expressed in spleen and bone marrow.

It localises to the cell membrane. The protein localises to the membrane raft. In terms of biological role, receptor for TNFSF11/RANKL/TRANCE/OPGL; essential for RANKL-mediated osteoclastogenesis. Its interaction with EEIG1 promotes osteoclastogenesis via facilitating the transcription of NFATC1 and activation of PLCG2. Involved in the regulation of interactions between T-cells and dendritic cells. The chain is Tumor necrosis factor receptor superfamily member 11A (Tnfrsf11a) from Mus musculus (Mouse).